The chain runs to 407 residues: Imidazolonepropionase (407 aa).

Residues H68 and H70 each contribute to the Fe(3+) site. Zn(2+)-binding residues include H68 and H70. 3 residues coordinate 4-imidazolone-5-propanoate: R77, Y140, and H173. N-formimidoyl-L-glutamate is bound at residue Y140. H238 provides a ligand contact to Fe(3+). Residue H238 participates in Zn(2+) binding. Position 241 (Q241) interacts with 4-imidazolone-5-propanoate. Position 313 (D313) interacts with Fe(3+). D313 provides a ligand contact to Zn(2+). N315 and G317 together coordinate N-formimidoyl-L-glutamate. T318 lines the 4-imidazolone-5-propanoate pocket.

This sequence belongs to the metallo-dependent hydrolases superfamily. HutI family. The cofactor is Zn(2+). It depends on Fe(3+) as a cofactor.

The protein localises to the cytoplasm. It carries out the reaction 4-imidazolone-5-propanoate + H2O = N-formimidoyl-L-glutamate. It functions in the pathway amino-acid degradation; L-histidine degradation into L-glutamate; N-formimidoyl-L-glutamate from L-histidine: step 3/3. In terms of biological role, catalyzes the hydrolytic cleavage of the carbon-nitrogen bond in imidazolone-5-propanoate to yield N-formimidoyl-L-glutamate. It is the third step in the universal histidine degradation pathway. The chain is Imidazolonepropionase from Burkholderia lata (strain ATCC 17760 / DSM 23089 / LMG 22485 / NCIMB 9086 / R18194 / 383).